Consider the following 858-residue polypeptide: DNA mismatch repair protein MutS (858 aa).

618–625 (GPNMGGKS) contacts ATP.

It belongs to the DNA mismatch repair MutS family.

Functionally, this protein is involved in the repair of mismatches in DNA. It is possible that it carries out the mismatch recognition step. This protein has a weak ATPase activity. This Shewanella woodyi (strain ATCC 51908 / MS32) protein is DNA mismatch repair protein MutS.